A 441-amino-acid polypeptide reads, in one-letter code: Proline--tRNA ligase (441 aa).

The protein belongs to the class-II aminoacyl-tRNA synthetase family. ProS type 2 subfamily. As to quaternary structure, homodimer.

It is found in the cytoplasm. It catalyses the reaction tRNA(Pro) + L-proline + ATP = L-prolyl-tRNA(Pro) + AMP + diphosphate. Its function is as follows. Catalyzes the attachment of proline to tRNA(Pro) in a two-step reaction: proline is first activated by ATP to form Pro-AMP and then transferred to the acceptor end of tRNA(Pro). This Methylorubrum extorquens (strain PA1) (Methylobacterium extorquens) protein is Proline--tRNA ligase.